The primary structure comprises 502 residues: Glycerol kinase (502 aa).

Position 13 (Thr13) interacts with ADP. Thr13, Thr14, and Ser15 together coordinate ATP. Residue Thr13 coordinates sn-glycerol 3-phosphate. Arg17 serves as a coordination point for ADP. Sn-glycerol 3-phosphate is bound by residues Arg83, Glu84, Tyr135, and Asp245. Glycerol is bound by residues Arg83, Glu84, Tyr135, Asp245, and Gln246. ADP contacts are provided by Thr267 and Gly310. Positions 267, 310, 314, and 411 each coordinate ATP. ADP contacts are provided by Gly411 and Asn415.

Belongs to the FGGY kinase family. As to quaternary structure, homotetramer and homodimer (in equilibrium).

The catalysed reaction is glycerol + ATP = sn-glycerol 3-phosphate + ADP + H(+). It participates in polyol metabolism; glycerol degradation via glycerol kinase pathway; sn-glycerol 3-phosphate from glycerol: step 1/1. Its activity is regulated as follows. Activated by phosphorylation and inhibited by fructose 1,6-bisphosphate (FBP). Functionally, key enzyme in the regulation of glycerol uptake and metabolism. Catalyzes the phosphorylation of glycerol to yield sn-glycerol 3-phosphate. This Lactobacillus delbrueckii subsp. bulgaricus (strain ATCC BAA-365 / Lb-18) protein is Glycerol kinase.